We begin with the raw amino-acid sequence, 447 residues long: NADH-quinone oxidoreductase subunit N (447 aa).

13 helical membrane passes run 4–24, 27–47, 68–88, 92–112, 113–133, 146–166, 181–201, 215–235, 245–265, 280–300, 302–322, 342–362, and 376–395; these read FAAL…MLAA, LPGL…VALA, LTGL…RPDG, EGPA…GAVH, AASL…LFVL, FLIL…LGHA, ALLT…LALV, PGAA…TALV, VWAL…NLAA, VGHA…APAA, LFYI…AALI, GAAM…AGFF, and AWAL…YYYL.

The protein belongs to the complex I subunit 2 family. As to quaternary structure, NDH-1 is composed of 14 different subunits. Subunits NuoA, H, J, K, L, M, N constitute the membrane sector of the complex.

It localises to the cell inner membrane. It catalyses the reaction a quinone + NADH + 5 H(+)(in) = a quinol + NAD(+) + 4 H(+)(out). NDH-1 shuttles electrons from NADH, via FMN and iron-sulfur (Fe-S) centers, to quinones in the respiratory chain. The immediate electron acceptor for the enzyme in this species is believed to be ubiquinone. Couples the redox reaction to proton translocation (for every two electrons transferred, four hydrogen ions are translocated across the cytoplasmic membrane), and thus conserves the redox energy in a proton gradient. The polypeptide is NADH-quinone oxidoreductase subunit N (Cereibacter sphaeroides (strain ATCC 17025 / ATH 2.4.3) (Rhodobacter sphaeroides)).